Reading from the N-terminus, the 292-residue chain is Cyclin-dependent kinase 5 homolog (292 aa).

Residues 4 to 285 form the Protein kinase domain; sequence YSKIEKLGEG…AAAALKHPYF (282 aa). Residues 10–18 and Lys-33 each bind ATP; that span reads LGEGTYGIV. Residue Thr-14 is modified to Phosphothreonine. Residue Tyr-15 is modified to Phosphotyrosine. Residue Asp-126 is the Proton acceptor of the active site.

It belongs to the protein kinase superfamily. CMGC Ser/Thr protein kinase family. CDC2/CDKX subfamily.

It catalyses the reaction L-seryl-[protein] + ATP = O-phospho-L-seryl-[protein] + ADP + H(+). The enzyme catalyses L-threonyl-[protein] + ATP = O-phospho-L-threonyl-[protein] + ADP + H(+). With respect to regulation, phosphorylation at Thr-14 or Tyr-15 inactivates the enzyme. This chain is Cyclin-dependent kinase 5 homolog (cdk5), found in Dictyostelium discoideum (Social amoeba).